A 750-amino-acid chain; its full sequence is Photosystem I P700 chlorophyll a apoprotein A1 (750 aa).

Transmembrane regions (helical) follow at residues 70–93, 156–179, 195–219, 291–309, 346–369, 385–411, 433–455, and 531–549; these read VFSA…FHGA, LYCT…FHYH, LNHH…HVSL, IAHH…GHMY, WHAQ…HHMY, LSLF…IFMV, AIIS…LYIH, and FLVH…LILL. 2 residues coordinate [4Fe-4S] cluster: C573 and C582. Transmembrane regions (helical) follow at residues 589–610 and 664–686; these read HVFL…HFSW and LSAY…MFLF. Residue H675 participates in chlorophyll a' binding. Residues M683 and Y691 each coordinate chlorophyll a. Residue W692 participates in phylloquinone binding. Residues 724 to 744 form a helical membrane-spanning segment; sequence AVGVTHYLLGGIATTWAFFLA.

Belongs to the PsaA/PsaB family. In terms of assembly, the PsaA/B heterodimer binds the P700 chlorophyll special pair and subsequent electron acceptors. PSI consists of a core antenna complex that captures photons, and an electron transfer chain that converts photonic excitation into a charge separation. The eukaryotic PSI reaction center is composed of at least 11 subunits. It depends on P700 is a chlorophyll a/chlorophyll a' dimer, A0 is one or more chlorophyll a, A1 is one or both phylloquinones and FX is a shared 4Fe-4S iron-sulfur center. as a cofactor.

The protein resides in the plastid. It is found in the chloroplast thylakoid membrane. It carries out the reaction reduced [plastocyanin] + hnu + oxidized [2Fe-2S]-[ferredoxin] = oxidized [plastocyanin] + reduced [2Fe-2S]-[ferredoxin]. In terms of biological role, psaA and PsaB bind P700, the primary electron donor of photosystem I (PSI), as well as the electron acceptors A0, A1 and FX. PSI is a plastocyanin-ferredoxin oxidoreductase, converting photonic excitation into a charge separation, which transfers an electron from the donor P700 chlorophyll pair to the spectroscopically characterized acceptors A0, A1, FX, FA and FB in turn. Oxidized P700 is reduced on the lumenal side of the thylakoid membrane by plastocyanin. This chain is Photosystem I P700 chlorophyll a apoprotein A1, found in Solanum bulbocastanum (Wild potato).